The chain runs to 191 residues: Apoptosis regulator BHRF1 (191 aa).

The interval 1–18 (MAYSTREILLALCIRDSR) is interaction with host VRK2. Residue Asn22 is glycosylated (N-linked (GlcNAc...) asparagine; by host). A BH1 motif is present at residues 89–109 (EIFHRGDPSLGRALAWMAWCM). The segment at 89–142 (EIFHRGDPSLGRALAWMAWCMHACRTLCCNQSTPYYVVDLSVRGMLEASEGLDG) is interaction with host VRK2. Asn118 carries an N-linked (GlcNAc...) asparagine; by host glycan. Residues 142 to 157 (GWIHQQGGWSTLIEDN) carry the BH2 motif. A helical membrane pass occupies residues 166–186 (WTLFLAGLTLSLLVICSYLFI).

The protein belongs to the Bcl-2 family. Interacts with isoform 1 of host VRK2; this interaction is involved in protecting cells from apoptosis. Interacts with host PRA1; this interaction seems to modulate BHRF1 anti-apoptotic activity. Interacts with host BCL2L11. Interacts with host BAD and BBC3. Interacts with BALF1; BALF1 acting as a negative regulator of the survival function of BHRF1. Interacts with host BECN1.

The protein localises to the host membrane. The protein resides in the host mitochondrion. Prevents premature death of the host cell during virus production, which would otherwise reduce the amount of progeny virus. Acts as a host B-cell leukemia/lymphoma 2 (Bcl-2) homolog, and interacts with pro-apoptotic proteins to prevent mitochondria permeabilization, release of cytochrome c and subsequent apoptosis of the host cell. In addition, plays a role in the inhibiton of host BECN1-mediated starvation-induced autophagy without affecting basal levels of autophagy. The protein is Apoptosis regulator BHRF1 of Epstein-Barr virus (strain GD1) (HHV-4).